We begin with the raw amino-acid sequence, 163 residues long: HTH-type transcriptional regulator IscR (163 aa).

Residues Arg-2–Asn-131 form the HTH rrf2-type domain. A DNA-binding region (H-T-H motif) is located at residues Leu-28–Lys-51. [2Fe-2S] cluster is bound by residues Cys-92, Cys-98, and Cys-104.

The cofactor is [2Fe-2S] cluster.

Regulates the transcription of several operons and genes involved in the biogenesis of Fe-S clusters and Fe-S-containing proteins. The sequence is that of HTH-type transcriptional regulator IscR from Klebsiella pneumoniae (strain 342).